Here is a 301-residue protein sequence, read N- to C-terminus: tRNA dimethylallyltransferase (301 aa).

Position 8-15 (8-15 (GATGTGKS)) interacts with ATP. 10-15 (TGTGKS) is a binding site for substrate. The tract at residues 33-36 (DSMQ) is interaction with substrate tRNA.

The protein belongs to the IPP transferase family. Monomer. It depends on Mg(2+) as a cofactor.

The catalysed reaction is adenosine(37) in tRNA + dimethylallyl diphosphate = N(6)-dimethylallyladenosine(37) in tRNA + diphosphate. Its function is as follows. Catalyzes the transfer of a dimethylallyl group onto the adenine at position 37 in tRNAs that read codons beginning with uridine, leading to the formation of N6-(dimethylallyl)adenosine (i(6)A). This is tRNA dimethylallyltransferase from Tropheryma whipplei (strain Twist) (Whipple's bacillus).